The primary structure comprises 407 residues: UPF0597 protein NAMH_0191 (407 aa).

It belongs to the UPF0597 family.

This is UPF0597 protein NAMH_0191 from Nautilia profundicola (strain ATCC BAA-1463 / DSM 18972 / AmH).